The primary structure comprises 653 residues: Sulfate transporter 1.2 (653 aa).

A disordered region spans residues 1–30; that stretch reads MSSRAHPVDGSPATDGGHVPMKPSPTRHKV. The Cytoplasmic portion of the chain corresponds to 1–91; sequence MSSRAHPVDG…GRNYTFKKFR (91 aa). A helical membrane pass occupies residues 92-112; sequence GDLISGLTIASLCIPQDIGYA. Residues 113-116 lie on the Extracellular side of the membrane; sequence KLAN. A helical membrane pass occupies residues 117–137; it reads LDPKYGLYSSFVPPLVYACMG. The Cytoplasmic portion of the chain corresponds to 138–141; the sequence is SSRD. Residues 142-162 form a helical membrane-spanning segment; the sequence is IAIGPVAVVSLLLGTLLRAEI. The Extracellular segment spans residues 163–173; that stretch reads DPNTSPDEYLR. Transmembrane regions (helical) follow at residues 174 to 194 and 195 to 215; these read LAFT…FFRL and GFLI…GAAI. Over 216–253 the chain is Extracellular; it reads TIALQQLKGFLGIKKFTKKTDIISVLESVFKAAHHGWN. A helical membrane pass occupies residues 254-274; sequence WQTILIGASFLTFLLTSKIIG. Residues 275–280 lie on the Cytoplasmic side of the membrane; that stretch reads KKSKKL. Residues 281–301 form a helical membrane-spanning segment; the sequence is FWVPAIAPLISVIVSTFFVYI. At 302 to 339 the chain is on the extracellular side; that stretch reads TRADKQGVQIVKHLDQGINPSSFHLIYFTGDNLAKGIR. The chain crosses the membrane as a helical span at residues 340-360; sequence IGVVAGMVALTEAVAIGRTFA. Topologically, residues 361 to 372 are cytoplasmic; that stretch reads AMKDYQIDGNKE. A helical transmembrane segment spans residues 373–393; the sequence is MVALGMMNVVGSMSSCYVATG. Topologically, residues 394 to 409 are extracellular; that stretch reads SFSRSAVNFMAGCQTA. The helical transmembrane segment at 410-430 threads the bilayer; it reads VSNIIMSIVVLLTLLFLTPLF. Topologically, residues 431–438 are cytoplasmic; the sequence is KYTPNAIL. Residues 439–459 form a helical membrane-spanning segment; sequence AAIIINAVIPLIDIQAAILIF. Residues 460–466 are Extracellular-facing; sequence KVDKLDF. Residues 467-487 traverse the membrane as a helical segment; sequence IACIGAFFGVIFVSVEIGLLI. Over 488 to 653 the chain is Cytoplasmic; that stretch reads AVSISFAKIL…ACCPKLSNEV (166 aa). Positions 522–645 constitute an STAS domain; sequence QYPEATMVPG…LTVADAVEAC (124 aa).

The protein belongs to the SLC26A/SulP transporter (TC 2.A.53.1) family. Homodimer. Interacts with OASA1 through its STAS domain. Expressed in lateral root cap, root hairs, epidermal and cortical cells of roots.

It is found in the cell membrane. Its activity is regulated as follows. Interaction with OASA1 negatively impacts the transporter activity. Functionally, high-affinity H(+)/sulfate cotransporter that mediates the uptake of the environmental sulfate by plant roots. Plays a central role in the regulation of sulfate assimilation. Unable to transport molybdate. This Arabidopsis thaliana (Mouse-ear cress) protein is Sulfate transporter 1.2 (SULTR1;2).